Consider the following 381-residue polypeptide: 6-oxocyclohex-1-ene-1-carbonyl-CoA hydrolase (381 aa).

It belongs to the enoyl-CoA hydratase/isomerase family. As to quaternary structure, homohexamer.

It catalyses the reaction 6-oxocyclohex-1-ene-1-carbonyl-CoA + 2 H2O = 3-hydroxy-6-carboxyhexanoyl-CoA + H(+). It functions in the pathway aromatic compound metabolism; benzoyl-CoA degradation. In terms of biological role, involved in the central benzoyl-CoA catabolism. Catalyzes the addition of one molecule of water to the double bond and the hydrolytic cleavage of C-C bond in the alicyclic ring, 6-oxocyclohex-1-ene-1-carbonyl-CoA (6-OCH-CoA) to yield 3-hydroxypimelyl-CoA. The polypeptide is 6-oxocyclohex-1-ene-1-carbonyl-CoA hydrolase (Geobacter metallireducens (strain ATCC 53774 / DSM 7210 / GS-15)).